Here is a 206-residue protein sequence, read N- to C-terminus: Inosine triphosphate pyrophosphatase (206 aa).

21-26 (TGNAKK) contacts ITP. Position 49 (E49) interacts with Mg(2+). ITP contacts are provided by residues K61, 77 to 78 (DT), K94, 153 to 156 (FGWD), K176, and 181 to 182 (HR).

This sequence belongs to the HAM1 NTPase family. In terms of assembly, homodimer. Mg(2+) is required as a cofactor. Mn(2+) serves as cofactor.

It localises to the cytoplasm. It carries out the reaction ITP + H2O = IMP + diphosphate + H(+). The catalysed reaction is dITP + H2O = dIMP + diphosphate + H(+). The enzyme catalyses XTP + H2O = XMP + diphosphate + H(+). Pyrophosphatase that hydrolyzes non-canonical purine nucleotides such as inosine triphosphate (ITP), deoxyinosine triphosphate (dITP) or xanthosine 5'-triphosphate (XTP) to their respective monophosphate derivatives. The enzyme does not distinguish between the deoxy- and ribose forms. Probably excludes non-canonical purines from RNA and DNA precursor pools, thus preventing their incorporation into RNA and DNA and avoiding chromosomal lesions. In Vitis vinifera (Grape), this protein is Inosine triphosphate pyrophosphatase.